The chain runs to 101 residues: Small ribosomal subunit protein uS14 (101 aa).

A disordered region spans residues 44–74 (ASRKLSRLPRDSSPVRLRNRDQVDGRPRGYV). Over residues 61 to 70 (RNRDQVDGRP) the composition is skewed to basic and acidic residues.

It belongs to the universal ribosomal protein uS14 family. As to quaternary structure, part of the 30S ribosomal subunit. Contacts proteins S3 and S10.

In terms of biological role, binds 16S rRNA, required for the assembly of 30S particles and may also be responsible for determining the conformation of the 16S rRNA at the A site. In Cutibacterium acnes (strain DSM 16379 / KPA171202) (Propionibacterium acnes), this protein is Small ribosomal subunit protein uS14.